Reading from the N-terminus, the 249-residue chain is Phosphomannomutase (249 aa).

Asp15 functions as the Nucleophile in the catalytic mechanism. Mg(2+) is bound by residues Asp15 and Asp17. Asp17 functions as the Proton donor/acceptor in the catalytic mechanism. 6 residues coordinate alpha-D-mannose 1-phosphate: Arg24, Arg126, Arg137, Arg144, Ser182, and Asp184. The Mg(2+) site is built by Asp210, Phe222, and Thr227.

This sequence belongs to the eukaryotic PMM family. In terms of assembly, homodimer. It depends on Mg(2+) as a cofactor. In terms of tissue distribution, expressed in roots, leaves, flag leaves and immature spikes.

It is found in the cytoplasm. It carries out the reaction alpha-D-mannose 1-phosphate = D-mannose 6-phosphate. It functions in the pathway nucleotide-sugar biosynthesis; GDP-alpha-D-mannose biosynthesis; alpha-D-mannose 1-phosphate from D-fructose 6-phosphate: step 2/2. Catalyzes the interconversion of mannose-6-phosphate to mannose-1-phosphate, the precursor for the synthesis of GDP-mannose. GDP-mannose is an essential sugar nucleotide for the synthesis of D-mannose-containing cell wall polysaccharides (galactomannans and glucomannans), glycolipids, glycoproteins and the antioxidant L-ascorbate. Can complement the yeast temperature-sensitive mutant sec53-6. The chain is Phosphomannomutase from Triticum aestivum (Wheat).